A 269-amino-acid polypeptide reads, in one-letter code: Ribosomal RNA small subunit methyltransferase A (269 aa).

S-adenosyl-L-methionine-binding residues include Asn-20, Leu-22, Gly-47, Glu-68, Asp-90, and Asn-110.

This sequence belongs to the class I-like SAM-binding methyltransferase superfamily. rRNA adenine N(6)-methyltransferase family. RsmA subfamily.

The protein resides in the cytoplasm. It catalyses the reaction adenosine(1518)/adenosine(1519) in 16S rRNA + 4 S-adenosyl-L-methionine = N(6)-dimethyladenosine(1518)/N(6)-dimethyladenosine(1519) in 16S rRNA + 4 S-adenosyl-L-homocysteine + 4 H(+). In terms of biological role, specifically dimethylates two adjacent adenosines (A1518 and A1519) in the loop of a conserved hairpin near the 3'-end of 16S rRNA in the 30S particle. May play a critical role in biogenesis of 30S subunits. This Chlorobium phaeobacteroides (strain DSM 266 / SMG 266 / 2430) protein is Ribosomal RNA small subunit methyltransferase A.